We begin with the raw amino-acid sequence, 302 residues long: Glutaminase (302 aa).

The substrate site is built by Ser-61, Asn-111, Glu-155, Asn-162, Tyr-186, Tyr-238, and Val-256.

Belongs to the glutaminase family. Homotetramer.

The catalysed reaction is L-glutamine + H2O = L-glutamate + NH4(+). In Pseudomonas syringae pv. tomato (strain ATCC BAA-871 / DC3000), this protein is Glutaminase.